We begin with the raw amino-acid sequence, 685 residues long: Probable serine/threonine-protein kinase CPE1738 (685 aa).

In terms of domain architecture, Protein kinase spans 10-275 (YELLQCVGEG…LEKIKKDPNV (266 aa)). Residues 16-24 (VGEGGMSFV) and Lys-39 each bind ATP. The Proton acceptor role is filled by Glu-143. The interval 277 to 339 (ISSKSAEDED…NIQTKPQKAI (63 aa)) is disordered. The segment covering 306–329 (EPDEDDEDDDEYYEDDEDEDEEEN) has biased composition (acidic residues). PASTA domains follow at residues 376–440 (GKDV…TVSG), 441–508 (GEGQ…TISK), 513–581 (KSET…TINY), and 589–648 (EKPK…TMEE). The interval 480–500 (VPRGEVISQSPNANESVDKGS) is disordered. The tract at residues 623-685 (DTAKVKSVSN…PKQPEQSGNN (63 aa)) is disordered. 2 stretches are compositionally biased toward low complexity: residues 627–645 (VKSVSNSGEVEEGGSVSVT) and 654–685 (QPTQPNQPTQPTQPNQQAQPEQPKQPEQSGNN).

It belongs to the protein kinase superfamily. Ser/Thr protein kinase family.

It carries out the reaction L-seryl-[protein] + ATP = O-phospho-L-seryl-[protein] + ADP + H(+). It catalyses the reaction L-threonyl-[protein] + ATP = O-phospho-L-threonyl-[protein] + ADP + H(+). In Clostridium perfringens (strain 13 / Type A), this protein is Probable serine/threonine-protein kinase CPE1738.